The sequence spans 230 residues: Fibronectin type III domain-containing protein 4 (230 aa).

The signal sequence occupies residues 1–40 (MPGCLPADSVGTMASLMPLSPYLSPTVLLLVSCDLGFVRA). Over 41 to 163 (DRPPSPVNVT…GLDGERPLQT (123 aa)) the chain is Extracellular. The region spanning 43 to 136 (PPSPVNVTVT…PRVHFRTLKG (94 aa)) is the Fibronectin type-III domain. N48 and N143 each carry an N-linked (GlcNAc...) asparagine glycan. Residues 118–156 (GLRGESPPGPRVHFRTLKGSDRLPSNSSSPGDITVEGLD) form a disordered region. A helical transmembrane segment spans residues 164–184 (GEVVIIVVVLLMWAAVIGLFC). Residues 185–230 (RQYDIIKDNDSNNNPKEKGKGPEQSPQGRPVGTRQKKSPSINTIDV) lie on the Cytoplasmic side of the membrane. Basic and acidic residues predominate over residues 193 to 205 (NDSNNNPKEKGKG). The tract at residues 193-230 (NDSNNNPKEKGKGPEQSPQGRPVGTRQKKSPSINTIDV) is disordered.

The protein localises to the membrane. Its subcellular location is the secreted. In terms of biological role, has anti-inflammatory properties. In the colon, acts on macrophages to down-regulate inflammation. May suppress osteoclastogenesis and mature osteoclast resorptive function. In white adipose tissue, decreases local inflammation, via interaction with GPR116. Also required for proper systemic glucose tolerance, specifically sensitizing white adipocytes to insulin and promoting glucose uptake. The insulin sensitizing function in adipose tissue is mediated by interaction with ADGRF5/GPR116 and activation of cAMP signaling. In Bos taurus (Bovine), this protein is Fibronectin type III domain-containing protein 4 (FNDC4).